Consider the following 372-residue polypeptide: NAD(P)H-quinone oxidoreductase subunit 1 (372 aa).

Transmembrane regions (helical) follow at residues 27–47 (IIWLPLPMLLVLVAAVVGVLV), 97–117 (ILFTAGPILVLVPVILSWLIV), 128–148 (VGIGIFLWIALSSIQPIGLLM), 176–196 (LALSVLAIVLMTNSLSTIDIV), 204–224 (ILSWNIWRQPVGFIVFWICAL), 266–286 (ILSALLVSILYLGGWGFPVPV), 308–328 (SIGIVMTVLKAYLLVFIAILL), and 347–367 (FLLPISLANLLITAGLKLAFP).

Belongs to the complex I subunit 1 family. NDH-1 is composed of at least 11 different subunits.

It localises to the cellular thylakoid membrane. The catalysed reaction is a plastoquinone + NADH + (n+1) H(+)(in) = a plastoquinol + NAD(+) + n H(+)(out). It catalyses the reaction a plastoquinone + NADPH + (n+1) H(+)(in) = a plastoquinol + NADP(+) + n H(+)(out). Its function is as follows. NDH-1 shuttles electrons from an unknown electron donor, via FMN and iron-sulfur (Fe-S) centers, to quinones in the respiratory and/or the photosynthetic chain. The immediate electron acceptor for the enzyme in this species is believed to be plastoquinone. Couples the redox reaction to proton translocation, and thus conserves the redox energy in a proton gradient. The protein is NAD(P)H-quinone oxidoreductase subunit 1 of Prochlorococcus marinus (strain AS9601).